A 436-amino-acid polypeptide reads, in one-letter code: Glutamate-1-semialdehyde 2,1-aminomutase (436 aa).

An N6-(pyridoxal phosphate)lysine modification is found at K274.

It belongs to the class-III pyridoxal-phosphate-dependent aminotransferase family. HemL subfamily. Homodimer. Requires pyridoxal 5'-phosphate as cofactor.

It is found in the cytoplasm. It carries out the reaction (S)-4-amino-5-oxopentanoate = 5-aminolevulinate. Its pathway is porphyrin-containing compound metabolism; protoporphyrin-IX biosynthesis; 5-aminolevulinate from L-glutamyl-tRNA(Glu): step 2/2. In Albidiferax ferrireducens (strain ATCC BAA-621 / DSM 15236 / T118) (Rhodoferax ferrireducens), this protein is Glutamate-1-semialdehyde 2,1-aminomutase.